A 305-amino-acid polypeptide reads, in one-letter code: MSKKLTFQEIILTLQQYWNDQGCMLMQAYDNEKGAGTMSPYTFLRAIGPEPWNAAYVEPSRRPADGRYGENPNRLYQHHQFQVVMKPSPSNIQELYLASLEKLGINPLEHDIRFVEDNWENPSTGSAGLGWEVWLDGMEITQFTYFQQVGGLATSPVTAEVTYGLERLASYIQEVDSVYDIEWAPGVKYGEIFLQPEYEHSKYSFEMSDQDMLLENFEKFEKEASRALEEGLVHPAYDYVLKCSHTFNLLDARGAVSVTERAGYIARIRNLARVVAKTFVAERKKLGFPLLDEATRAILLAEDGE.

It belongs to the class-II aminoacyl-tRNA synthetase family. In terms of assembly, tetramer of two alpha and two beta subunits.

Its subcellular location is the cytoplasm. It carries out the reaction tRNA(Gly) + glycine + ATP = glycyl-tRNA(Gly) + AMP + diphosphate. The sequence is that of Glycine--tRNA ligase alpha subunit from Streptococcus pyogenes serotype M49 (strain NZ131).